Consider the following 382-residue polypeptide: Cytochrome c biogenesis CcmF N-terminal-like mitochondrial protein 1 (382 aa).

The next 4 membrane-spanning stretches (helical) occupy residues 1 to 21 (MSIS…FVAF), 30 to 50 (AFGA…LLFC), 79 to 99 (HEGS…FFCY), and 117 to 137 (SLFF…LLRY).

Belongs to the CcmF/CycK/Ccl1/NrfE/CcsA family. Interacts with CCMFN2 and CCMH.

Its subcellular location is the mitochondrion inner membrane. In terms of biological role, forms a complex with CCMFC, CCMFN2 and CCMH that performs the assembly of heme with c-type apocytochromes in mitochondria. This chain is Cytochrome c biogenesis CcmF N-terminal-like mitochondrial protein 1, found in Arabidopsis thaliana (Mouse-ear cress).